Here is a 293-residue protein sequence, read N- to C-terminus: Ribosomal protein L11 methyltransferase (293 aa).

Residues Thr145, Gly166, Asp188, and Asn230 each coordinate S-adenosyl-L-methionine.

The protein belongs to the methyltransferase superfamily. PrmA family.

Its subcellular location is the cytoplasm. The catalysed reaction is L-lysyl-[protein] + 3 S-adenosyl-L-methionine = N(6),N(6),N(6)-trimethyl-L-lysyl-[protein] + 3 S-adenosyl-L-homocysteine + 3 H(+). Functionally, methylates ribosomal protein L11. This Escherichia coli (strain 55989 / EAEC) protein is Ribosomal protein L11 methyltransferase.